The primary structure comprises 316 residues: Small neutral protease regulatory protein (316 aa).

Residues 1–56 (MRHLRALCAIADTGSVRRAARELGVSQPALTTQLRRIEQSLGAELFHRGRDGCRPT) enclose the HTH lysR-type domain. The segment at residues 16–35 (VRRAARELGVSQPALTTQLR) is a DNA-binding region (H-T-H motif).

This sequence belongs to the LysR transcriptional regulatory family.

Its function is as follows. Transcriptional trans-activator of the gene (mprA) for the small neutral protease. The polypeptide is Small neutral protease regulatory protein (mprR) (Streptomyces coelicolor).